The sequence spans 552 residues: CTP synthase (552 aa).

Residues 1 to 265 form an amidoligase domain region; it reads MTKFVFVTGG…DRIVCEKLAL (265 aa). Ser13 lines the CTP pocket. UTP is bound at residue Ser13. ATP-binding positions include 14 to 19 and Asp71; that span reads SLGKGI. Mg(2+) contacts are provided by Asp71 and Glu139. CTP is bound by residues 146-148, 186-191, and Lys222; these read DIE and KTKPTQ. Residues 186 to 191 and Lys222 contribute to the UTP site; that span reads KTKPTQ. The 256-residue stretch at 290-545 folds into the Glutamine amidotransferase type-1 domain; the sequence is TIGMVGKYVD…IKAALAHKQA (256 aa). Gly351 serves as a coordination point for L-glutamine. The active-site Nucleophile; for glutamine hydrolysis is the Cys378. Residues 379–382, Glu402, and Arg468 each bind L-glutamine; that span reads LGMQ. Residues His518 and Glu520 contribute to the active site.

This sequence belongs to the CTP synthase family. As to quaternary structure, homotetramer.

The catalysed reaction is UTP + L-glutamine + ATP + H2O = CTP + L-glutamate + ADP + phosphate + 2 H(+). The enzyme catalyses L-glutamine + H2O = L-glutamate + NH4(+). It carries out the reaction UTP + NH4(+) + ATP = CTP + ADP + phosphate + 2 H(+). The protein operates within pyrimidine metabolism; CTP biosynthesis via de novo pathway; CTP from UDP: step 2/2. With respect to regulation, allosterically activated by GTP, when glutamine is the substrate; GTP has no effect on the reaction when ammonia is the substrate. The allosteric effector GTP functions by stabilizing the protein conformation that binds the tetrahedral intermediate(s) formed during glutamine hydrolysis. Inhibited by the product CTP, via allosteric rather than competitive inhibition. In terms of biological role, catalyzes the ATP-dependent amination of UTP to CTP with either L-glutamine or ammonia as the source of nitrogen. Regulates intracellular CTP levels through interactions with the four ribonucleotide triphosphates. The sequence is that of CTP synthase from Herminiimonas arsenicoxydans.